A 128-amino-acid chain; its full sequence is Fluoride-specific ion channel FluC (128 aa).

The next 4 membrane-spanning stretches (helical) occupy residues 5–25 (IVAI…LSIG), 35–55 (LGTL…VVAF), 67–87 (LFVI…SVEV), and 96–116 (FGWA…LTGL). Residues G75 and T78 each coordinate Na(+).

Belongs to the fluoride channel Fluc/FEX (TC 1.A.43) family.

It is found in the cell inner membrane. The enzyme catalyses fluoride(in) = fluoride(out). Its activity is regulated as follows. Na(+) is not transported, but it plays an essential structural role and its presence is essential for fluoride channel function. In terms of biological role, fluoride-specific ion channel. Important for reducing fluoride concentration in the cell, thus reducing its toxicity. The protein is Fluoride-specific ion channel FluC of Burkholderia thailandensis (strain ATCC 700388 / DSM 13276 / CCUG 48851 / CIP 106301 / E264).